Here is a 530-residue protein sequence, read N- to C-terminus: Na(+)/H(+) antiporter NhaB (530 aa).

12 helical membrane-spanning segments follow: residues 13–33 (FLGKAPDWYKIAILSFLVINP), 34–54 (LVFFFVDPFTAGWLLVVEFIF), 90–110 (LVANIEVLLLLVFMVAGIYFM), 121–141 (ILIGIKSKTALSVAFCFTAAF), 145–165 (FLDALTVIAVVISVAVGFYAI), 205–225 (LLMHAGVGTALGGVMTMVGEP), 241–261 (FIIRMLPITAPVFICGILTCI), 306–326 (GLIAVWLIVGLALHLAAVGLI), 351–371 (EEALPFTALLAVFFAVVAVII), 393–413 (LALFYVANGLLSMVSDNVFVG), 455–475 (GQAAFLFLLTSALAPLIQLSY), and 481–501 (MALPYTIVLALVGMFGIIFFL).

It belongs to the NhaB Na(+)/H(+) (TC 2.A.34) antiporter family.

It is found in the cell inner membrane. It catalyses the reaction 2 Na(+)(in) + 3 H(+)(out) = 2 Na(+)(out) + 3 H(+)(in). In terms of biological role, na(+)/H(+) antiporter that extrudes sodium in exchange for external protons. This chain is Na(+)/H(+) antiporter NhaB, found in Aliivibrio fischeri (strain ATCC 700601 / ES114) (Vibrio fischeri).